The sequence spans 162 residues: E3 ubiquitin-protein ligase LAP (162 aa).

Residues 1 to 78 are Cytoplasmic-facing; the sequence is MEGSDNTNTH…RWKCSFMYCN (78 aa). The RING-CH-type zinc finger occupies 3–61; sequence GSDNTNTHCWICKDEYNVSTNFCNCKNEFKIVHKNCLEEWINFSHNTKCKICNGKYNIK. 8 residues coordinate Zn(2+): Cys11, Cys14, Cys25, Cys27, His35, Cys38, Cys51, and Cys54. A helical membrane pass occupies residues 79–99; that stretch reads VPAICVSLICLLLLPLTILLV. Over 100–121 the chain is Lumenal; it reads KFNLKSMLENIENRDLIALISA. Residues 122–142 traverse the membrane as a helical segment; sequence MAYSLPCVVGFITVVHILIAL. Residues 143–162 lie on the Cytoplasmic side of the membrane; it reads YDYYLAAKSDNTTYQVYEYI.

The protein belongs to the poxviridae LAP protein family.

It localises to the host membrane. The protein resides in the host Golgi apparatus. It is found in the host trans-Golgi network membrane. Its subcellular location is the host early endosome membrane. The enzyme catalyses S-ubiquitinyl-[E2 ubiquitin-conjugating enzyme]-L-cysteine + [acceptor protein]-L-lysine = [E2 ubiquitin-conjugating enzyme]-L-cysteine + N(6)-ubiquitinyl-[acceptor protein]-L-lysine.. Its function is as follows. E3 ubiquitin-protein ligase which promotes ubiquitination and subsequent degradation of host MHC-I and CD4 molecules, presumably to prevent lysis of infected cells by cytotoxic T-lymphocytes and NK cell. Binds target molecules through transmembrane interaction. The result of this ubiquitination is the enhancement of the endocytosis of the target chain and the delivery to the lysosome, where it is proteolytically destroyed. The protein is E3 ubiquitin-protein ligase LAP (LW010) of Lumpy skin disease virus (LSDV).